The primary structure comprises 402 residues: MHTSDPSNTATDHQQQTLELSIELMRRDSVTPHDKGCQEVLVERLSPLGFVHEFMYFGDEQASGRDAQVKNLWARRGNQDPVVCFAGHTDVVPTGNPDNWRIAPFDAKVHDGYLWGRGAADMKTGIAAFTVATERFVKNHPDHNGSIAMLITSDEEGPSINGTVKVIEVLEARNEKITYCLVGEPSSTDSLGDVIKNGRRGSLGGILTVTGKQGHVAYPHLAVNPIHALLPALAEFSVTEWDKGNDFFPATSMQISNINGGTGANNVIPETVEVVFNFRFSTETTEEELRAKTHEILDKHFANTEATYEIDWKLSGHPFLTAEGKLVDACKVAIKDITGTDTQLSTSGGTSDGRFIAPTGAQVVELGVRNATIHQVDERVEIDDIGKLAQIYERMLEELLLG.

Zn(2+) is bound at residue histidine 88. Residue aspartate 90 is part of the active site. Residue aspartate 121 participates in Zn(2+) binding. The active-site Proton acceptor is glutamate 155. Zn(2+) contacts are provided by glutamate 156, glutamate 184, and histidine 374.

It belongs to the peptidase M20A family. DapE subfamily. As to quaternary structure, homodimer. Zn(2+) is required as a cofactor. It depends on Co(2+) as a cofactor.

It carries out the reaction N-succinyl-(2S,6S)-2,6-diaminopimelate + H2O = (2S,6S)-2,6-diaminopimelate + succinate. It functions in the pathway amino-acid biosynthesis; L-lysine biosynthesis via DAP pathway; LL-2,6-diaminopimelate from (S)-tetrahydrodipicolinate (succinylase route): step 3/3. Its function is as follows. Catalyzes the hydrolysis of N-succinyl-L,L-diaminopimelic acid (SDAP), forming succinate and LL-2,6-diaminopimelate (DAP), an intermediate involved in the bacterial biosynthesis of lysine and meso-diaminopimelic acid, an essential component of bacterial cell walls. This chain is Succinyl-diaminopimelate desuccinylase, found in Psychrobacter sp. (strain PRwf-1).